Consider the following 443-residue polypeptide: ATP-dependent protease ATPase subunit HslU (443 aa).

ATP-binding positions include Ile-19, 61-66 (GVGKTE), Asp-256, Glu-321, and Arg-393.

The protein belongs to the ClpX chaperone family. HslU subfamily. As to quaternary structure, a double ring-shaped homohexamer of HslV is capped on each side by a ring-shaped HslU homohexamer. The assembly of the HslU/HslV complex is dependent on binding of ATP.

Its subcellular location is the cytoplasm. Functionally, ATPase subunit of a proteasome-like degradation complex; this subunit has chaperone activity. The binding of ATP and its subsequent hydrolysis by HslU are essential for unfolding of protein substrates subsequently hydrolyzed by HslV. HslU recognizes the N-terminal part of its protein substrates and unfolds these before they are guided to HslV for hydrolysis. This chain is ATP-dependent protease ATPase subunit HslU, found in Cupriavidus pinatubonensis (strain JMP 134 / LMG 1197) (Cupriavidus necator (strain JMP 134)).